Reading from the N-terminus, the 447-residue chain is Cellulosome-anchoring protein (447 aa).

Positions 1 to 29 (MKRIKRILAVLTIFALLATINAFTFVSLA) are cleaved as a signal peptide. Positions 30–180 (QTNTIEIIIG…EIIEASAPEA (151 aa)) constitute a Cohesin domain. The segment at 30-180 (QTNTIEIIIG…EIIEASAPEA (151 aa)) is receptor binding site for duplicated segment of CipA. The disordered stretch occupies residues 177–247 (APEATPTPGS…EHAPFLKGYP (71 aa)). Residues 188–200 (AGSGAGGGTGSSG) are compositionally biased toward gly residues. The segment covering 201–223 (SGQPSATPTPTATEKPSTTPKTT) has biased composition (low complexity). 3 SLH domains span residues 216–280 (PSTT…AGKN), 281–344 (SSIT…EQGT), and 345–408 (DVKT…GAVL). In terms of domain architecture, SLH 4; truncated spans 409–429 (EFTDVPVNYWAYKDIAEGVIY).

It is found in the secreted. The protein resides in the cell wall. Its subcellular location is the S-layer. Functionally, anchors the cellulosome to the cell surface by binding the duplicated segment that is present at the C-terminal end of CipA. The protein is Cellulosome-anchoring protein (ancA) of Acetivibrio thermocellus (strain ATCC 27405 / DSM 1237 / JCM 9322 / NBRC 103400 / NCIMB 10682 / NRRL B-4536 / VPI 7372) (Clostridium thermocellum).